The primary structure comprises 236 residues: MPYEPPTHTVERSLRATTGARTVAGVDEVGRGAWAGPVTVCAAVTGLRRPPEGLTDSKLLTPRRRAELDPVLRSWVTAYALGDASPQEIDDLGMTAALRLAAVRALEGLPVRPDAVILDGKHDYLGVPWKVRTVIKGDQSCIAVAAASVIAKVHRDRMMAELGAASEDCADFDFGANAGYPSPVHRAALEERGPTAHHRLSWAYLDALPRWQHLKKVRFSAEAAALESGGQLGFEF.

Residues 21–214 (RTVAGVDEVG…LDALPRWQHL (194 aa)) form the RNase H type-2 domain. A divalent metal cation-binding residues include D27, E28, and D119.

This sequence belongs to the RNase HII family. It depends on Mn(2+) as a cofactor. Requires Mg(2+) as cofactor.

It is found in the cytoplasm. It carries out the reaction Endonucleolytic cleavage to 5'-phosphomonoester.. Functionally, endonuclease that specifically degrades the RNA of RNA-DNA hybrids. The sequence is that of Ribonuclease HII from Streptomyces griseus subsp. griseus (strain JCM 4626 / CBS 651.72 / NBRC 13350 / KCC S-0626 / ISP 5235).